The following is a 285-amino-acid chain: Biotin synthase (285 aa).

The 222-residue stretch at 2-223 (STRKQIFLCA…RRAHTLLGED (222 aa)) folds into the Radical SAM core domain. Residues cysteine 20, cysteine 24, and cysteine 27 each contribute to the [4Fe-4S] cluster site. [2Fe-2S] cluster is bound by residues cysteine 64, cysteine 99, and cysteine 157.

This sequence belongs to the radical SAM superfamily. Biotin synthase family. Homodimer. [4Fe-4S] cluster serves as cofactor. Requires [2Fe-2S] cluster as cofactor.

It carries out the reaction (4R,5S)-dethiobiotin + (sulfur carrier)-SH + 2 reduced [2Fe-2S]-[ferredoxin] + 2 S-adenosyl-L-methionine = (sulfur carrier)-H + biotin + 2 5'-deoxyadenosine + 2 L-methionine + 2 oxidized [2Fe-2S]-[ferredoxin]. It participates in cofactor biosynthesis; biotin biosynthesis; biotin from 7,8-diaminononanoate: step 2/2. Catalyzes the conversion of dethiobiotin (DTB) to biotin by the insertion of a sulfur atom into dethiobiotin via a radical-based mechanism. This Sulfurovum sp. (strain NBC37-1) protein is Biotin synthase.